The chain runs to 484 residues: Phosphomevalonate kinase erg8 (484 aa).

A disordered region spans residues 54–77 (REAASGSAHGRSDTPQAEGNVHGD). 184–194 (AHKTGLGSSAA) contributes to the ATP binding site.

The protein belongs to the GHMP kinase family. Mevalonate kinase subfamily.

It catalyses the reaction (R)-5-phosphomevalonate + ATP = (R)-5-diphosphomevalonate + ADP. It participates in isoprenoid biosynthesis; isopentenyl diphosphate biosynthesis via mevalonate pathway; isopentenyl diphosphate from (R)-mevalonate: step 2/3. In terms of biological role, phosphomevalonate kinase; part of the second module of ergosterol biosynthesis pathway that includes the middle steps of the pathway. Erg8 converts 5-phosphomevalonate to 5-diphosphomevalonate. The second module is carried out in the vacuole and involves the formation of farnesyl diphosphate, which is also an important intermediate in the biosynthesis of ubiquinone, dolichol, heme and prenylated proteins. Activity by the mevalonate kinase erg12 (AFUA_4G07780) first converts mevalonate into 5-phosphomevalonate. 5-phosphomevalonate is then further converted to 5-diphosphomevalonate by the phosphomevalonate kinase erg8 (AFUA_5G10680). The diphosphomevalonate decarboxylase mvd1 (AFUA_4G07130) then produces isopentenyl diphosphate. The isopentenyl-diphosphate delta-isomerase idi1 (AFUA_6G11160) then catalyzes the 1,3-allylic rearrangement of the homoallylic substrate isopentenyl (IPP) to its highly electrophilic allylic isomer, dimethylallyl diphosphate (DMAPP). Finally the farnesyl diphosphate synthase erg20 (AFUA_5G02450) catalyzes the sequential condensation of isopentenyl pyrophosphate with dimethylallyl pyrophosphate, and then with the resultant geranylpyrophosphate to the ultimate product farnesyl pyrophosphate. In Aspergillus fumigatus (strain ATCC MYA-4609 / CBS 101355 / FGSC A1100 / Af293) (Neosartorya fumigata), this protein is Phosphomevalonate kinase erg8.